A 254-amino-acid chain; its full sequence is Phosphoribosylaminoimidazole-succinocarboxamide synthase (254 aa).

It belongs to the SAICAR synthetase family.

The catalysed reaction is 5-amino-1-(5-phospho-D-ribosyl)imidazole-4-carboxylate + L-aspartate + ATP = (2S)-2-[5-amino-1-(5-phospho-beta-D-ribosyl)imidazole-4-carboxamido]succinate + ADP + phosphate + 2 H(+). It participates in purine metabolism; IMP biosynthesis via de novo pathway; 5-amino-1-(5-phospho-D-ribosyl)imidazole-4-carboxamide from 5-amino-1-(5-phospho-D-ribosyl)imidazole-4-carboxylate: step 1/2. This Sinorhizobium medicae (strain WSM419) (Ensifer medicae) protein is Phosphoribosylaminoimidazole-succinocarboxamide synthase.